Consider the following 110-residue polypeptide: Thioredoxin (110 aa).

The region spanning 3–108 (KPIEVHDSDF…YREIFDKVLA (106 aa)) is the Thioredoxin domain. Cys-32 and Cys-35 are oxidised to a cystine. At Lys-105 the chain carries N6,N6-dimethyllysine; alternate. Position 105 is an N6-methyllysine; alternate (Lys-105).

Functionally, participates in various redox reactions through the reversible oxidation of its active center dithiol to a disulfide and catalyzes dithiol-disulfide exchange reactions. In Chloroflexus aurantiacus (strain ATCC 29366 / DSM 635 / J-10-fl), this protein is Thioredoxin (trxA).